Reading from the N-terminus, the 147-residue chain is Calcium-regulated heat-stable protein 1 (147 aa).

Over residues 1-12 (MSSEPPPPPQPP) the composition is skewed to pro residues. Positions 1–52 (MSSEPPPPPQPPTHQASVGLLDTPRSRERSPSPLRGNVVPSPLPTRRTRTFS) are disordered. An N-acetylserine modification is found at Ser2. Residues Ser30, Ser32, and Ser41 each carry the phosphoserine modification. Residue Thr45 is modified to Phosphothreonine. Residues Ser52 and Ser58 each carry the phosphoserine modification. The 68-residue stretch at 62–129 (VYKGVCKCFC…KLQAVEVVIT (68 aa)) folds into the CSD domain. Residues Ser146 and Ser147 each carry the phosphoserine modification.

Homodimer. Interacts with STYX. In terms of processing, dephosphorylated by calcineurin in a Ca(2+) dependent manner. Can be phosphorylated by DYRK2 (in vitro).

It localises to the cytoplasm. The protein localises to the P-body. The protein resides in the cytoplasmic granule. In terms of biological role, binds mRNA and regulates the stability of target mRNA. Binds single-stranded DNA (in vitro). This is Calcium-regulated heat-stable protein 1 (CARHSP1) from Homo sapiens (Human).